Here is a 257-residue protein sequence, read N- to C-terminus: NAD kinase (257 aa).

The Proton acceptor role is filled by Asp-46. NAD(+) contacts are provided by residues 46-47, His-51, 116-117, Asp-146, Ala-154, 157-162, and Gln-218; these read DG, NE, and TAYNLS.

It belongs to the NAD kinase family. The cofactor is a divalent metal cation.

It localises to the cytoplasm. It carries out the reaction NAD(+) + ATP = ADP + NADP(+) + H(+). Involved in the regulation of the intracellular balance of NAD and NADP, and is a key enzyme in the biosynthesis of NADP. Catalyzes specifically the phosphorylation on 2'-hydroxyl of the adenosine moiety of NAD to yield NADP. This is NAD kinase from Rhizobium meliloti (strain 1021) (Ensifer meliloti).